A 144-amino-acid chain; its full sequence is D-aminoacyl-tRNA deacylase (144 aa).

The Gly-cisPro motif, important for rejection of L-amino acids motif lies at 136 to 137 (GP).

It belongs to the DTD family. In terms of assembly, homodimer.

It is found in the cytoplasm. The catalysed reaction is glycyl-tRNA(Ala) + H2O = tRNA(Ala) + glycine + H(+). The enzyme catalyses a D-aminoacyl-tRNA + H2O = a tRNA + a D-alpha-amino acid + H(+). An aminoacyl-tRNA editing enzyme that deacylates mischarged D-aminoacyl-tRNAs. Also deacylates mischarged glycyl-tRNA(Ala), protecting cells against glycine mischarging by AlaRS. Acts via tRNA-based rather than protein-based catalysis; rejects L-amino acids rather than detecting D-amino acids in the active site. By recycling D-aminoacyl-tRNA to D-amino acids and free tRNA molecules, this enzyme counteracts the toxicity associated with the formation of D-aminoacyl-tRNA entities in vivo and helps enforce protein L-homochirality. The sequence is that of D-aminoacyl-tRNA deacylase from Haemophilus influenzae (strain ATCC 51907 / DSM 11121 / KW20 / Rd).